The following is a 300-amino-acid chain: GTPase Era (300 aa).

The Era-type G domain maps to 8–176 (RCGYVAIVGR…EAQIAKHLPE (169 aa)). The interval 16–23 (GRPNVGKS) is G1. 16–23 (GRPNVGKS) lines the GTP pocket. The interval 42–46 (QTTRH) is G2. Residues 63–66 (DTPG) form a G3 region. GTP-binding positions include 63-67 (DTPGM) and 125-128 (NKTD). The G4 stretch occupies residues 125–128 (NKTD). The G5 stretch occupies residues 155-157 (ISA). In terms of domain architecture, KH type-2 spans 199 to 283 (VREKIMRQLG…MLNLWVKVKG (85 aa)).

This sequence belongs to the TRAFAC class TrmE-Era-EngA-EngB-Septin-like GTPase superfamily. Era GTPase family. Monomer.

It localises to the cytoplasm. The protein localises to the cell inner membrane. An essential GTPase that binds both GDP and GTP, with rapid nucleotide exchange. Plays a role in 16S rRNA processing and 30S ribosomal subunit biogenesis and possibly also in cell cycle regulation and energy metabolism. In Pseudomonas putida (strain ATCC 700007 / DSM 6899 / JCM 31910 / BCRC 17059 / LMG 24140 / F1), this protein is GTPase Era.